Reading from the N-terminus, the 1866-residue chain is Protein NLRC5 (1866 aa).

The interval 105–135 is disordered; it reads GAEGKSQPESQLHHGLKRPHQSCGSSPRRKQ. Residues 222–539 form the NACHT domain; it reads RVTVLLGKAG…PKVNKDTLTQ (318 aa). Position 228 to 235 (228 to 235) interacts with ATP; that stretch reads GKAGMGKT. 26 LRR repeats span residues 599-622, 713-737, 741-765, 769-792, 869-892, 897-921, 930-953, 976-1000, 1004-1026, 1031-1058, 1138-1161, 1162-1184, 1242-1265, 1272-1294, 1462-1488, 1493-1516, 1521-1544, 1554-1577, 1578-1600, 1605-1628, 1633-1656, 1661-1684, 1687-1714, 1715-1739, 1741-1762, and 1795-1818; these read LKKLATRKLTGPKVVELCHCVDET, MGRLQMLGLAGSKITARGISHLVKA, CPQLKEVSFRDNQLSDQVVLNIVEV, LPRLRKLDLSSNSICVSTLLCLAR, GPHLEEVDLSGNQLEDEGCRLMAE, LHIARKLDLSNNGLSVAGVHCVLRA, ELHISLQHKTVIFMFAQEPEEQKG, SRRMRLTHCGLQEKHLEQLCKALGG, LGHLHLDFSGNALGDEGAARLAQ, LGALQSLNLSENGLSLDAVLGLVRCFST, LELQLSCEFLSDQSLETLLDCLPQ, LPQLSLLQLSQTGLSPKSPFLLA, CKDLSQVDLSANLLGDSGLRCLLE, ISGLLDLSHNSISQESALYLLET, CARLQQLSLSQVNLCEDDDASSLLLQS, LSELKTFRLTSSCVSTEGLAHLAS, CHHLEELDLSNNQFDEEGTKALMR, RLDLSHLLLNSSTLALLTHRLSQM, TCLQSLRLNRNSIGDVGCCHLSE, ATSLEELDLSHNQIGDAGVQHLAT, LPELRKIDLSGNSISSAGGVQLAE, CRRLEELMLGCNALGDPTALGLAQ, PQHLRVLHLPFSHLGPGGALSLAQALDG, SPHLEEISLAENNLAGGVLRFCMEL, LLRQIDLVSCKIDNQTAKLLTS, and MGRLKRVDLEKNQITALGAWLLAE.

Belongs to the NLRP family. Interacts with CHUK and IKBKB; prevents CHUK and IKBKB phosphorylation and inhibits their kinase activity. Interacts with RIGI and IFIH1; blocks the interaction of MAVS to RIGI. In terms of tissue distribution, expressed in spleen, thymus, lung, brain, tonsil, heart and prostate.

Its subcellular location is the cytoplasm. In terms of biological role, probable regulator of the NF-kappa-B and type I interferon signaling pathways. May also regulate the type II interferon signaling pathway. Plays a role in homeostatic control of innate immunity and in antiviral defense mechanisms. The protein is Protein NLRC5 (NLRC5) of Homo sapiens (Human).